The primary structure comprises 102 residues: Aspartyl/glutamyl-tRNA(Asn/Gln) amidotransferase subunit C (102 aa).

Belongs to the GatC family. In terms of assembly, heterotrimer of A, B and C subunits.

It carries out the reaction L-glutamyl-tRNA(Gln) + L-glutamine + ATP + H2O = L-glutaminyl-tRNA(Gln) + L-glutamate + ADP + phosphate + H(+). The enzyme catalyses L-aspartyl-tRNA(Asn) + L-glutamine + ATP + H2O = L-asparaginyl-tRNA(Asn) + L-glutamate + ADP + phosphate + 2 H(+). In terms of biological role, allows the formation of correctly charged Asn-tRNA(Asn) or Gln-tRNA(Gln) through the transamidation of misacylated Asp-tRNA(Asn) or Glu-tRNA(Gln) in organisms which lack either or both of asparaginyl-tRNA or glutaminyl-tRNA synthetases. The reaction takes place in the presence of glutamine and ATP through an activated phospho-Asp-tRNA(Asn) or phospho-Glu-tRNA(Gln). In Leuconostoc citreum (strain KM20), this protein is Aspartyl/glutamyl-tRNA(Asn/Gln) amidotransferase subunit C.